A 284-amino-acid chain; its full sequence is Putative cysteine-rich repeat secretory protein 7 (284 aa).

The N-terminal stretch at 1 to 24 is a signal peptide; the sequence is MARIILTAPLFYFFFSLLSHQTMS. 2 consecutive Gnk2-homologous domains span residues 26–128 and 134–244; these read PQHM…NVSF and SKPV…TFVL. The tract at residues 247 to 284 is disordered; the sequence is PAPSPSSLPPISPTSSPPLSLPPQLPPPLSQPPPPLST.

Belongs to the cysteine-rich repeat secretory protein family.

The protein resides in the secreted. The sequence is that of Putative cysteine-rich repeat secretory protein 7 (CRRSP7) from Arabidopsis thaliana (Mouse-ear cress).